The chain runs to 117 residues: U9-theraphotoxin-Hhn1a (117 aa).

The N-terminal stretch at 1–21 (MNTVRVTFLLVFVLAVSLGQA) is a signal peptide. Positions 22–75 (DEDGNRMEMRQEIEKTEADSSYFAENLLLQKLEELEAKLWEETSEESRNSRQKR) are excised as a propeptide. 3 cysteine pairs are disulfide-bonded: Cys-76–Cys-94, Cys-83–Cys-99, and Cys-93–Cys-114.

It belongs to the neurotoxin 14 (magi-1) family. 01 (HNTX-16) subfamily. In terms of tissue distribution, expressed by the venom gland.

The protein resides in the secreted. Probable ion channel inhibitor. The protein is U9-theraphotoxin-Hhn1a of Cyriopagopus hainanus (Chinese bird spider).